The chain runs to 81 residues: Large ribosomal subunit protein bL31B (81 aa).

It belongs to the bacterial ribosomal protein bL31 family. Type B subfamily. As to quaternary structure, part of the 50S ribosomal subunit.

The sequence is that of Large ribosomal subunit protein bL31B from Oceanobacillus iheyensis (strain DSM 14371 / CIP 107618 / JCM 11309 / KCTC 3954 / HTE831).